A 729-amino-acid polypeptide reads, in one-letter code: 1,4-alpha-glucan branching enzyme GlgB 2 (729 aa).

D408 acts as the Nucleophile in catalysis. Catalysis depends on E461, which acts as the Proton donor.

This sequence belongs to the glycosyl hydrolase 13 family. GlgB subfamily. Monomer.

The enzyme catalyses Transfers a segment of a (1-&gt;4)-alpha-D-glucan chain to a primary hydroxy group in a similar glucan chain.. It functions in the pathway glycan biosynthesis; glycogen biosynthesis. In terms of biological role, catalyzes the formation of the alpha-1,6-glucosidic linkages in glycogen by scission of a 1,4-alpha-linked oligosaccharide from growing alpha-1,4-glucan chains and the subsequent attachment of the oligosaccharide to the alpha-1,6 position. The sequence is that of 1,4-alpha-glucan branching enzyme GlgB 2 from Xanthomonas campestris pv. campestris (strain 8004).